The sequence spans 355 residues: Uroporphyrinogen decarboxylase (355 aa).

Residues 27-31 (RQAGR), Asp-77, Tyr-154, Thr-209, and His-327 each bind substrate.

The protein belongs to the uroporphyrinogen decarboxylase family. As to quaternary structure, homodimer.

It localises to the cytoplasm. The enzyme catalyses uroporphyrinogen III + 4 H(+) = coproporphyrinogen III + 4 CO2. Its pathway is porphyrin-containing compound metabolism; protoporphyrin-IX biosynthesis; coproporphyrinogen-III from 5-aminolevulinate: step 4/4. Catalyzes the decarboxylation of four acetate groups of uroporphyrinogen-III to yield coproporphyrinogen-III. This is Uroporphyrinogen decarboxylase from Yersinia pestis bv. Antiqua (strain Antiqua).